The following is a 768-amino-acid chain: Phosphoribosylformylglycinamidine synthase subunit PurL (768 aa).

Histidine 48 is an active-site residue. Positions 51 and 90 each coordinate ATP. A Mg(2+)-binding site is contributed by glutamate 92. Residues 93 to 96 and arginine 115 contribute to the substrate site; that span reads SHNH. Residue histidine 94 is the Proton acceptor of the active site. Residue aspartate 116 participates in Mg(2+) binding. Glutamine 239 lines the substrate pocket. Position 267 (aspartate 267) interacts with Mg(2+). Position 311–313 (311–313) interacts with substrate; it reads ESQ. Positions 507 and 544 each coordinate ATP. Asparagine 545 contacts Mg(2+). Serine 547 is a binding site for substrate.

The protein belongs to the FGAMS family. Monomer. Part of the FGAM synthase complex composed of 1 PurL, 1 PurQ and 2 PurS subunits.

It is found in the cytoplasm. It carries out the reaction N(2)-formyl-N(1)-(5-phospho-beta-D-ribosyl)glycinamide + L-glutamine + ATP + H2O = 2-formamido-N(1)-(5-O-phospho-beta-D-ribosyl)acetamidine + L-glutamate + ADP + phosphate + H(+). It participates in purine metabolism; IMP biosynthesis via de novo pathway; 5-amino-1-(5-phospho-D-ribosyl)imidazole from N(2)-formyl-N(1)-(5-phospho-D-ribosyl)glycinamide: step 1/2. Functionally, part of the phosphoribosylformylglycinamidine synthase complex involved in the purines biosynthetic pathway. Catalyzes the ATP-dependent conversion of formylglycinamide ribonucleotide (FGAR) and glutamine to yield formylglycinamidine ribonucleotide (FGAM) and glutamate. The FGAM synthase complex is composed of three subunits. PurQ produces an ammonia molecule by converting glutamine to glutamate. PurL transfers the ammonia molecule to FGAR to form FGAM in an ATP-dependent manner. PurS interacts with PurQ and PurL and is thought to assist in the transfer of the ammonia molecule from PurQ to PurL. The sequence is that of Phosphoribosylformylglycinamidine synthase subunit PurL from Parasynechococcus marenigrum (strain WH8102).